Consider the following 528-residue polypeptide: Equilibrative nucleoside transporter 4 (528 aa).

Residues 1–68 (MGSIGSQRLK…EEPVPDDRYH (68 aa)) are Extracellular-facing. Residues 69-89 (AIYFAMLLAGVGFLLPYNSFI) traverse the membrane as a helical segment. The Cytoplasmic segment spans residues 90–101 (TDVDYLHHKYPG). Residues 102-122 (TSIVFDMSLTYILVALAAVLL) form a helical membrane-spanning segment. Residues 123-139 (NNVVVERLNLHTRITTG) are Extracellular-facing. A helical membrane pass occupies residues 140 to 160 (YLLALGPLLFISICDVWLQLF). Residues 161-166 (SHDQAY) are Cytoplasmic-facing. The helical transmembrane segment at 167 to 187 (AINLAAVGTVAFGCTVQQSSF) threads the bilayer. The Extracellular portion of the chain corresponds to 188 to 231 (YGYTGLLPKRYTQGVMTGESTAGVMISLSRILTKLLLPDERAST). A helical transmembrane segment spans residues 232-252 (IIFFLVSAGLELLCFLLHLLV). Topologically, residues 253–346 (RRSRFVLYYT…LLLHRYVVAR (94 aa)) are cytoplasmic. A helical transmembrane segment spans residues 347–367 (VIWADMLSIAVTYFITLCLFP). The Extracellular segment spans residues 368–376 (GLESEIRHC). Residues 377–397 (VLGEWLPILVMAVFNLSDFVG) traverse the membrane as a helical segment. Over 398–411 (KILAALPVEWRGTH) the chain is Cytoplasmic. The chain crosses the membrane as a helical span at residues 412-432 (LLACSCLRVVFIPLFILCVYP). Residues 433–445 (SGMPALRHPAWPC) are Extracellular-facing. A helical membrane pass occupies residues 446–466 (VFSLLMGISNGYFGSVPMILA). The Cytoplasmic portion of the chain corresponds to 467–481 (AGKVSPKQRELAGNT). The helical transmembrane segment at 482–504 (MTVSYMSGLTLGSAVAYCTYSLT) threads the bilayer. Over 505–528 (RDAHGSCFQTATAAAANDSIPVGP) the chain is Extracellular. A glycan (N-linked (GlcNAc...) asparagine) is linked at asparagine 521.

This sequence belongs to the SLC29A/ENT transporter (TC 2.A.57) family. In terms of processing, N-glycosylated. Expressed in heart. Expressed in choroid plexus.

It is found in the cell membrane. The protein localises to the apical cell membrane. The enzyme catalyses serotonin(out) = serotonin(in). The catalysed reaction is dopamine(out) = dopamine(in). It catalyses the reaction (R)-noradrenaline(out) = (R)-noradrenaline(in). It carries out the reaction (R)-adrenaline(out) = (R)-adrenaline(in). The enzyme catalyses histamine(out) = histamine(in). The catalysed reaction is tyramine(in) = tyramine(out). It catalyses the reaction guanidine(out) = guanidine(in). It carries out the reaction adenine(out) = adenine(in). The enzyme catalyses adenosine(in) = adenosine(out). Its activity is regulated as follows. Activated at acidic pH. Electrogenic voltage-dependent transporter that mediates the transport of a variety of endogenous bioactive amines, cationic xenobiotics and drugs. Utilizes the physiologic inside-negative membrane potential as a driving force to facilitate cellular uptake of organic cations. Functions as a Na(+)- and Cl(-)-independent bidirectional transporter. Substrate transport is pH-dependent and enhanced under acidic condition, which is most likely the result of allosteric changes in the transporter structure. Implicated in monoamine neurotransmitters uptake such as serotonin, dopamine, adrenaline/epinephrine, noradrenaline/norepinephrine, histamine and tyramine, thereby supporting a role in homeostatic regulation of aminergic neurotransmission in the central nervous system. Also responsible for the uptake of bioactive amines and drugs through the blood-cerebrospinal fluid (CSF) barrier, from the CSF into choroid plexus epithelial cells, thereby playing a significant role in the clearance of cationic neurotoxins, xenobiotics and metabolic waste in the brain. Involved in bidirectional transport of the purine nucleoside adenosine and plays a role in the regulation of extracellular adenosine concentrations in cardiac tissues, in particular during ischemia. May be involved in organic cation uptake from the tubular lumen into renal tubular cells, thereby contributing to organic cation reabsorption in the kidney. Also transports adenine and guanidine. The sequence is that of Equilibrative nucleoside transporter 4 from Mus musculus (Mouse).